A 744-amino-acid chain; its full sequence is Tripartite motif-containing protein 2 (744 aa).

Phosphoserine is present on Ser-10. The segment at 23 to 64 (CSICLERYKNPKVLPCLHTFCERCLQNYIPAHSLTLSCPVCR) adopts an RING-type zinc-finger fold. Residues 113-154 (GKPLSCPNHDGNVMEFYCQSCETAMCRECTEGEHAEHPTVPL) form a B box-type zinc finger. Positions 118, 121, 141, and 146 each coordinate Zn(2+). The Filamin repeat unit spans residues 320-421 (TTNAVASETV…IRGSPFKLKV (102 aa)). Thr-371 is modified (phosphothreonine). Phosphoserine occurs at positions 375, 424, and 428. The segment at 432 to 462 (EGVKRRVKSPGSGHVKQKAVKRPASMYSTGK) is disordered. NHL repeat units lie at residues 473–516 (IFRV…FSND), 520–563 (KSRF…FSND), 564–605 (GKFK…FQPN), 609–652 (VTRF…FNQE), 656–699 (MLKF…FDGS), and 700–743 (GSFL…YRYL).

Belongs to the TRIM/RBCC family. Forms homooligomers. Interacts with TRIM3; this interaction reduces TRIM2 activity. Interacts with myosin V; myosin V may not be a substrate for ubiquitination. Interacts with NEFL. Interacts with phosphorylated BCL2L11. Interacts with SIRPA. Post-translationally, RING-type zinc finger-dependent and UBE2D1-dependent autoubiquitination.

It carries out the reaction S-ubiquitinyl-[E2 ubiquitin-conjugating enzyme]-L-cysteine + [acceptor protein]-L-lysine = [E2 ubiquitin-conjugating enzyme]-L-cysteine + N(6)-ubiquitinyl-[acceptor protein]-L-lysine.. It functions in the pathway protein modification; protein ubiquitination. UBE2D1-dependent E3 ubiquitin-protein ligase that mediates the ubiquitination of NEFL and of phosphorylated BCL2L11. Plays a neuroprotective function. May play a role in neuronal rapid ischemic tolerance. Plays a role in antiviral immunity and limits New World arenavirus infection independently of its ubiquitin ligase activity. The chain is Tripartite motif-containing protein 2 (Trim2) from Rattus norvegicus (Rat).